Reading from the N-terminus, the 114-residue chain is Fumarate reductase subunit D (114 aa).

3 consecutive transmembrane segments (helical) span residues 24–44 (VSAI…PFGL), 50–70 (LITF…TIFP), and 92–112 (GGFI…FAVI).

The protein belongs to the FrdD family. As to quaternary structure, part of an enzyme complex containing four subunits: a flavoprotein (FrdA), an iron-sulfur protein (FrdB), and two hydrophobic anchor proteins (FrdC and FrdD).

It is found in the cell inner membrane. In terms of biological role, anchors the catalytic components of the fumarate reductase complex to the cell membrane, binds quinones. The sequence is that of Fumarate reductase subunit D from Haemophilus influenzae (strain ATCC 51907 / DSM 11121 / KW20 / Rd).